The chain runs to 507 residues: ATP synthase subunit alpha (507 aa).

Position 171-178 (171-178 (GDRQTGKT)) interacts with ATP.

This sequence belongs to the ATPase alpha/beta chains family. As to quaternary structure, F-type ATPases have 2 components, CF(1) - the catalytic core - and CF(0) - the membrane proton channel. CF(1) has five subunits: alpha(3), beta(3), gamma(1), delta(1), epsilon(1). CF(0) has three main subunits: a(1), b(2) and c(9-12). The alpha and beta chains form an alternating ring which encloses part of the gamma chain. CF(1) is attached to CF(0) by a central stalk formed by the gamma and epsilon chains, while a peripheral stalk is formed by the delta and b chains.

It is found in the cell inner membrane. The catalysed reaction is ATP + H2O + 4 H(+)(in) = ADP + phosphate + 5 H(+)(out). Its function is as follows. Produces ATP from ADP in the presence of a proton gradient across the membrane. The alpha chain is a regulatory subunit. This chain is ATP synthase subunit alpha, found in Bdellovibrio bacteriovorus (strain ATCC 15356 / DSM 50701 / NCIMB 9529 / HD100).